Here is a 278-residue protein sequence, read N- to C-terminus: HTH-type transcriptional activator RhaS (278 aa).

One can recognise an HTH araC/xylS-type domain in the interval 174 to 272; that stretch reads NQLMAWLEEH…NWSPRDIRQG (99 aa). 2 consecutive DNA-binding regions (H-T-H motif) follow at residues 191 to 212 and 239 to 262; these read EAVAEQFSLSLRTLHRQLKQHT and VTEIAYRCGFGDSNHFSTLFRREF.

As to quaternary structure, binds DNA as a dimer.

The protein localises to the cytoplasm. Functionally, activates expression of the rhaBAD and rhaT operons. This chain is HTH-type transcriptional activator RhaS, found in Salmonella schwarzengrund (strain CVM19633).